The following is a 325-amino-acid chain: MISEEEKIKFLKELVEIYSPTGREEEAAKFIKEKFEEYGIEAYVDNVGNVIARKSGEGPLVLLAGHIDTVPGYIPVRIEGEVLWGRGSVDAKGPLATLFFSTIEGNANVIFAGLVDEEGFSKGARNLKIPRPDYIIVGEPSGTNGVTIGYKGSLTVRFVERVEKVHSSLGVGAAERLIEKWLEISKDFSDGFNGLNGRIVRFLAYDREFEFYGEMIINLRTPPGYVPPLEWDIIDFVPAYEVDRRSPLVRAFVKSIREAGLKPKLKKKSGTADTNILGPKFGVDAVAYGPGDSKLDHTPYERINLREYLKSIEILKAVLRKLKGG.

His-66 contributes to the Zn(2+) binding site. The active site involves Asp-68. Residue Asp-90 coordinates Zn(2+). The active-site Proton acceptor is the Glu-117. The Zn(2+) site is built by Glu-118, Glu-139, and His-297.

The protein belongs to the peptidase M20A family. LysK subfamily. Zn(2+) is required as a cofactor. It depends on Co(2+) as a cofactor.

It localises to the cytoplasm. The enzyme catalyses [amino-group carrier protein]-C-terminal-gamma-(L-lysyl)-L-glutamate + H2O = [amino-group carrier protein]-C-terminal-L-glutamate + L-lysine. The catalysed reaction is [amino-group carrier protein]-C-terminal-gamma-(L-ornithyl)-L-glutamate + H2O = [amino-group carrier protein]-C-terminal-L-glutamate + L-ornithine. It participates in amino-acid biosynthesis; L-lysine biosynthesis via AAA pathway; L-lysine from L-alpha-aminoadipate (Thermus route): step 5/5. It functions in the pathway amino-acid biosynthesis; L-arginine biosynthesis. Catalyzes the release of L-lysine from [LysW]-gamma-L-lysine and the release of L-ornithine from [LysW]-L-ornithine. The sequence is that of Putative [LysW]-lysine/[LysW]-ornithine hydrolase from Pyrococcus horikoshii (strain ATCC 700860 / DSM 12428 / JCM 9974 / NBRC 100139 / OT-3).